We begin with the raw amino-acid sequence, 501 residues long: Prostacyclin synthase (501 aa).

Residues 1-21 (MSWAALLGLLAVLLLLLLLLS) form a helical membrane-spanning segment. Residues Arg-107, Leu-113, Asn-288, 359–360 (TR), and Arg-383 each bind substrate. Residue Cys-442 coordinates heme.

The protein belongs to the cytochrome P450 family. Requires heme as cofactor.

The protein resides in the endoplasmic reticulum membrane. It carries out the reaction prostaglandin H2 = prostaglandin I2. The enzyme catalyses a hydroperoxyeicosatetraenoate = an oxoeicosatetraenoate + H2O. The catalysed reaction is (15S)-hydroperoxy-(5Z,8Z,11Z,13E)-eicosatetraenoate = 15-oxo-(5Z,8Z,11Z,13E)-eicosatetraenoate + H2O. It catalyses the reaction (15S)-hydroperoxy-(5Z,8Z,11Z,13E)-eicosatetraenoate + AH2 = (15S)-hydroxy-(5Z,8Z,11Z,13E)-eicosatetraenoate + A + H2O. Catalyzes the biosynthesis and metabolism of eicosanoids. Catalyzes the isomerization of prostaglandin H2 to prostacyclin (= prostaglandin I2), a potent mediator of vasodilation and inhibitor of platelet aggregation. Additionally, displays dehydratase activity, toward hydroperoxyeicosatetraenoates (HPETEs), especially toward (15S)-hydroperoxy-(5Z,8Z,11Z,13E)-eicosatetraenoate (15(S)-HPETE). The chain is Prostacyclin synthase (Ptgis) from Rattus norvegicus (Rat).